The chain runs to 186 residues: UPF0301 protein HI_0304 (186 aa).

This sequence belongs to the UPF0301 (AlgH) family.

The protein is UPF0301 protein HI_0304 of Haemophilus influenzae (strain ATCC 51907 / DSM 11121 / KW20 / Rd).